A 379-amino-acid polypeptide reads, in one-letter code: NADH-quinone oxidoreductase subunit D 2 (379 aa).

It belongs to the complex I 49 kDa subunit family. NDH-1 is composed of 14 different subunits. Subunits NuoB, C, D, E, F, and G constitute the peripheral sector of the complex.

Its subcellular location is the cell inner membrane. It carries out the reaction a quinone + NADH + 5 H(+)(in) = a quinol + NAD(+) + 4 H(+)(out). Its function is as follows. NDH-1 shuttles electrons from NADH, via FMN and iron-sulfur (Fe-S) centers, to quinones in the respiratory chain. The immediate electron acceptor for the enzyme in this species is believed to be ubiquinone. Couples the redox reaction to proton translocation (for every two electrons transferred, four hydrogen ions are translocated across the cytoplasmic membrane), and thus conserves the redox energy in a proton gradient. This chain is NADH-quinone oxidoreductase subunit D 2, found in Anaeromyxobacter dehalogenans (strain 2CP-C).